We begin with the raw amino-acid sequence, 132 residues long: Small ribosomal subunit protein uS11 (132 aa).

It belongs to the universal ribosomal protein uS11 family. Part of the 30S ribosomal subunit. Interacts with proteins S7 and S18. Binds to IF-3.

Its function is as follows. Located on the platform of the 30S subunit, it bridges several disparate RNA helices of the 16S rRNA. Forms part of the Shine-Dalgarno cleft in the 70S ribosome. The polypeptide is Small ribosomal subunit protein uS11 (Cupriavidus pinatubonensis (strain JMP 134 / LMG 1197) (Cupriavidus necator (strain JMP 134))).